A 265-amino-acid polypeptide reads, in one-letter code: Basic leucine zipper 6 (265 aa).

2 disordered regions span residues 1 to 24 and 77 to 139; these read MAQL…SAGG and LMSM…RDPK. The segment covering 85–97 has biased composition (low complexity); it reads GGSSAPGSDNGGS. The span at 122–132 shows a compositional bias: polar residues; the sequence is TQEQAAATSPT. The region spanning 137-189 is the bZIP domain; that stretch reads DPKRVKRILANRQSAQRSRVRKLQYISELERSVTTLQNEVSVLSPRVAFLDQQ. The segment at 139 to 158 is basic motif; the sequence is KRVKRILANRQSAQRSRVRK. Residues 165 to 186 form a leucine-zipper region; it reads LERSVTTLQNEVSVLSPRVAFL. Positions 239–265 are disordered; it reads LSGGLAADHAHVHGGPPPVRAEKELMS.

Expressed in roots, shoots and panicles.

The protein resides in the nucleus. Its function is as follows. Transcription regulator. The polypeptide is Basic leucine zipper 6 (BZIP06) (Oryza sativa subsp. japonica (Rice)).